The following is a 107-amino-acid chain: U1-lycotoxin-Ls1e (107 aa).

Residues Met1 to Ser20 form the signal peptide. The propeptide occupies Glu21–Arg41. Intrachain disulfides connect Cys44-Cys59, Cys51-Cys68, Cys58-Cys86, and Cys70-Cys84.

Belongs to the neurotoxin 19 (CSTX) family. 04 (U1-Lctx) subfamily. In terms of tissue distribution, expressed by the venom gland.

The protein localises to the secreted. The sequence is that of U1-lycotoxin-Ls1e from Lycosa singoriensis (Wolf spider).